A 1693-amino-acid chain; its full sequence is Latrophilin Cirl (1693 aa).

The Extracellular portion of the chain corresponds to 1 to 753 (MLPTILSISY…LFTMFDGNMR (753 aa)). Residues 25-114 (ACEGKKLTIE…KYLEAHYQCI (90 aa)) enclose the SUEL-type lectin domain. Asparagine 142 is a glycosylation site (N-linked (GlcNAc...) asparagine). 2 stretches are compositionally biased toward polar residues: residues 185–198 (TAVT…STTA) and 256–265 (NVTSPSNTRI). Positions 185–299 (TAVTHSTPWS…PGTAASGSVA (115 aa)) are disordered. N-linked (GlcNAc...) asparagine glycosylation is present at asparagine 256. Residues 275-299 (DDGTLLTTKSSPNRPPGTAASGSVA) show a composition bias toward low complexity. N-linked (GlcNAc...) asparagine glycans are attached at residues asparagine 301, asparagine 340, asparagine 397, asparagine 641, asparagine 689, and asparagine 716. Residues 375–399 (YDEYDDDASSTTPAPSGGDCLHNSS) form a disordered region. The 177-residue stretch at 564–740 (KKSKIYSSVV…AILMDVVDEH (177 aa)) folds into the GAIN-B domain. Cystine bridges form between cysteine 695-cysteine 722 and cysteine 710-cysteine 724. The interval 695-740 (CVFWNYIDHAWSANGCSLESTNRTHSVCSCNHLTNFAILMDVVDEH) is GPS. Residues 754 to 774 (IFIYISIGICVVFIVIALLTL) traverse the membrane as a helical segment. Over 775-787 (KLFNGVFVKSART) the chain is Cytoplasmic. The chain crosses the membrane as a helical span at residues 788–808 (SIYTSIYLCLLAIELLFLLGI). The Extracellular segment spans residues 809–814 (EQTETS). Residues 815–835 (IFCGFITIFLHCAILSGTAWF) form a helical membrane-spanning segment. At 836-861 (CYEAFHSYSTLTSDELLLEVDQTPKV) the chain is on the cytoplasmic side. Residues 862–882 (NCYYLLSYGLSLSVVAISLVI) traverse the membrane as a helical segment. Residues 883 to 906 (DPSTYTQNDYCVLMEANALFYATF) are Extracellular-facing. A helical transmembrane segment spans residues 907–927 (VVPVLVFFVAAIGYTFLSWII). Over 928–954 (MCRKSRTGLKTKEHTRLASVRFDIRCS) the chain is Cytoplasmic. A helical transmembrane segment spans residues 955 to 975 (FVFLLLLSAVWCSAYFYLRGA). Residues 976–985 (KMDDDTADVY) are Extracellular-facing. The chain crosses the membrane as a helical span at residues 986–1006 (GYCFICFNTLLGLYIFVFHCI). Residues 1007–1693 (QNEKIRREYR…VRCYLEPLAK (687 aa)) are Cytoplasmic-facing. At serine 1142 the chain carries Phosphoserine. 5 disordered regions span residues 1156-1194 (HKQQ…LKTP), 1220-1247 (KPNS…LHSR), 1294-1319 (QQQL…AEQH), 1433-1521 (GGGS…SDER), and 1601-1673 (LAVN…QQRH). Phosphoserine occurs at positions 1239 and 1246. Residues 1294–1309 (QQQLRRQQLHQQQQQL) are compositionally biased toward low complexity. Residues serine 1310 and serine 1311 each carry the phosphoserine modification. Positions 1439–1464 (GGSVSSRSQQQQLKKQQQQQSLAQQR) are enriched in low complexity. Composition is skewed to acidic residues over residues 1472-1486 (DDDD…EEAT) and 1496-1507 (CDEDEEEDESDL). Residues 1508 to 1521 (EHDAHGLPPQSDER) show a composition bias toward basic and acidic residues. Low complexity predominate over residues 1630-1655 (LQKLSPQSTTSSSSHTSHSNPNLHPH). Positions 1656 to 1672 (QLTHPHPHQHPPHHQQR) are enriched in basic residues.

This sequence belongs to the G-protein coupled receptor 2 family. LN-TM7 subfamily. In terms of assembly, forms a heterodimer, consisting of a large extracellular region non-covalently linked to a seven-transmembrane moiety. Proteolytically cleaved into 2 subunits, an extracellular subunit and a seven-transmembrane subunit.

Its subcellular location is the cell membrane. This chain is Latrophilin Cirl, found in Drosophila sechellia (Fruit fly).